Consider the following 373-residue polypeptide: Glutamine synthetase (373 aa).

N-acetylalanine is present on Ala-2. Residues 2–25 are required for glutamine-induced ubiquitination by CRL4(CRBN) and proteasomal degradation; it reads ATSASSHLNKGIKQVYMALPQGDK. N6-acetyllysine is present on residues Lys-11 and Lys-14. Residues 26–106 enclose the GS beta-grasp domain; sequence VQAMYIWIDG…VFCEVFKYNR (81 aa). A Phosphotyrosine modification is found at Tyr-104. The 261-residue stretch at 113–373 folds into the GS catalytic domain; sequence LRHTCKRIMD…TGDEPFQYKN (261 aa). Residue Glu-134 coordinates ATP. Mn(2+)-binding residues include Glu-134, Glu-136, Glu-196, and Glu-203. 203–208 is an ATP binding site; the sequence is EFQIGP. Residue 246–247 coordinates L-glutamate; the sequence is NW. Position 253 (His-253) interacts with Mn(2+). ATP-binding positions include 255-257, Arg-319, and Arg-324; that span reads NFS. Residue Arg-319 participates in L-glutamate binding. 336 to 338 lines the ADP pocket; sequence YFE. Glu-338 is a Mn(2+) binding site. Arg-340 contacts L-glutamate. Ser-343 carries the post-translational modification Phosphoserine.

This sequence belongs to the glutamine synthetase family. As to quaternary structure, decamer; composed of two pentamers. Interacts with PALMD. Interacts with RHOJ. Interacts with BEST2; this interaction tethers a fraction of GLUL to the membrane, causing a decrease of cytosolic glutamine synthase (GS) activity and inhibits the chloride channel activity of BEST2 by affecting the gating at the aperture in the absence of intracellular glutamate. Requires Mg(2+) as cofactor. It depends on Mn(2+) as a cofactor. Palmitoylated; undergoes autopalmitoylation. Post-translationally, acetylated by EP300/p300; acetylation is stimulated by increased glutamine levels and promotes ubiquitin-mediated proteasomal degradation. In terms of processing, ubiquitinated by ZNRF1. Ubiquitinated by the DCX (DDB1-CUL4-X-box) E3 ubiquitin-protein ligase complex called CRL4(CRBN), leading to proteasomal degradation.

The protein resides in the cytoplasm. It localises to the cytosol. It is found in the microsome. The protein localises to the mitochondrion. Its subcellular location is the cell membrane. The enzyme catalyses L-glutamate + NH4(+) + ATP = L-glutamine + ADP + phosphate + H(+). It catalyses the reaction L-cysteinyl-[protein] + hexadecanoyl-CoA = S-hexadecanoyl-L-cysteinyl-[protein] + CoA. Its activity is regulated as follows. Glutamine synthetase activity is inhibited by methionine sulfoximine (MSO). In terms of biological role, glutamine synthetase that catalyzes the ATP-dependent conversion of glutamate and ammonia to glutamine. Its role depends on tissue localization: in the brain, it regulates the levels of toxic ammonia and converts neurotoxic glutamate to harmless glutamine, whereas in the liver, it is one of the enzymes responsible for the removal of ammonia. Plays a key role in ammonium detoxification during erythropoiesis: the glutamine synthetase activity is required to remove ammonium generated by porphobilinogen deaminase (HMBS) during heme biosynthesis to prevent ammonium accumulation and oxidative stress. Essential for proliferation of fetal skin fibroblasts. Independently of its glutamine synthetase activity, required for endothelial cell migration during vascular development. Involved in angiogenesis by regulating membrane localization and activation of the GTPase RHOJ, possibly by promoting RHOJ palmitoylation. May act as a palmitoyltransferase for RHOJ: able to autopalmitoylate and then transfer the palmitoyl group to RHOJ. Plays a role in ribosomal 40S subunit biogenesis. Through the interaction with BEST2, inhibits BEST2 channel activity by affecting the gating at the aperture in the absence of intracellular L-glutamate, but sensitizes BEST2 to intracellular L-glutamate, which promotes the opening of BEST2 and thus relieves its inhibitory effect on BEST2. The protein is Glutamine synthetase of Bos taurus (Bovine).